A 105-amino-acid polypeptide reads, in one-letter code: Large ribosomal subunit protein eL33 (105 aa).

It belongs to the eukaryotic ribosomal protein eL33 family.

Functionally, the protein was found to bind to both initiator and elongator tRNAs and consequently was assigned to the P site or P and A site. The chain is Large ribosomal subunit protein eL33 (rpl35a) from Dictyostelium discoideum (Social amoeba).